A 242-amino-acid chain; its full sequence is UPF0073 membrane protein Rv1085c (242 aa).

The next 7 helical transmembrane spans lie at 42–62 (VYSA…SWAV), 67–87 (AGLT…VSAT), 108–128 (SMIF…ALPA), 133–153 (VVLS…MCWP), 159–179 (VGVP…ATIL), 186–206 (ALVL…LYAV), and 222–242 (FHAC…FVVF).

It belongs to the UPF0073 (Hly-III) family.

Its subcellular location is the cell membrane. The protein is UPF0073 membrane protein Rv1085c of Mycobacterium tuberculosis (strain ATCC 25618 / H37Rv).